The chain runs to 386 residues: 1-deoxy-D-xylulose 5-phosphate reductoisomerase (386 aa).

Residues Thr-13, Gly-14, Ser-15, Ile-16, Asn-40, and Asn-122 each contribute to the NADPH site. Residue Lys-123 participates in 1-deoxy-D-xylulose 5-phosphate binding. Glu-124 is a binding site for NADPH. Asp-148 contributes to the Mn(2+) binding site. The 1-deoxy-D-xylulose 5-phosphate site is built by Ser-149, Glu-150, Ser-177, and His-201. Mn(2+) is bound at residue Glu-150. Gly-207 lines the NADPH pocket. 4 residues coordinate 1-deoxy-D-xylulose 5-phosphate: Ser-214, Asn-219, Lys-220, and Glu-223. Glu-223 serves as a coordination point for Mn(2+).

Belongs to the DXR family. Requires Mg(2+) as cofactor. Mn(2+) serves as cofactor.

It carries out the reaction 2-C-methyl-D-erythritol 4-phosphate + NADP(+) = 1-deoxy-D-xylulose 5-phosphate + NADPH + H(+). Its pathway is isoprenoid biosynthesis; isopentenyl diphosphate biosynthesis via DXP pathway; isopentenyl diphosphate from 1-deoxy-D-xylulose 5-phosphate: step 1/6. Functionally, catalyzes the NADPH-dependent rearrangement and reduction of 1-deoxy-D-xylulose-5-phosphate (DXP) to 2-C-methyl-D-erythritol 4-phosphate (MEP). This Francisella tularensis subsp. holarctica (strain OSU18) protein is 1-deoxy-D-xylulose 5-phosphate reductoisomerase.